Consider the following 318-residue polypeptide: Olfactory receptor 13C9 (318 aa).

At methionine 1–leucine 25 the chain is on the extracellular side. Asparagine 5 is a glycosylation site (N-linked (GlcNAc...) asparagine). A helical membrane pass occupies residues leucine 26 to isoleucine 46. Over leucine 47–histidine 54 the chain is Cytoplasmic. Residues leucine 55–threonine 75 traverse the membrane as a helical segment. Topologically, residues threonine 76–valine 99 are extracellular. Cysteine 97 and cysteine 189 are disulfide-bonded. A helical transmembrane segment spans residues glutamine 100 to phenylalanine 120. Over aspartate 121–asparagine 139 the chain is Cytoplasmic. A helical membrane pass occupies residues alanine 140–threonine 160. Over threonine 161 to phenylalanine 197 the chain is Extracellular. The chain crosses the membrane as a helical span at residues leucine 198 to serine 217. The Cytoplasmic portion of the chain corresponds to tyrosine 218 to alanine 237. A helical transmembrane segment spans residues phenylalanine 238–methionine 258. Residues tyrosine 259–aspartate 277 lie on the Extracellular side of the membrane. A helical membrane pass occupies residues lysine 278–leucine 298. Over arginine 299–lysine 318 the chain is Cytoplasmic.

It belongs to the G-protein coupled receptor 1 family.

Its subcellular location is the cell membrane. Functionally, odorant receptor. In Homo sapiens (Human), this protein is Olfactory receptor 13C9 (OR13C9).